The primary structure comprises 177 residues: Crossover junction endodeoxyribonuclease RuvC (177 aa).

Catalysis depends on residues D8, E72, and D144. Mg(2+)-binding residues include D8, E72, and D144.

Belongs to the RuvC family. Homodimer which binds Holliday junction (HJ) DNA. The HJ becomes 2-fold symmetrical on binding to RuvC with unstacked arms; it has a different conformation from HJ DNA in complex with RuvA. In the full resolvosome a probable DNA-RuvA(4)-RuvB(12)-RuvC(2) complex forms which resolves the HJ. Requires Mg(2+) as cofactor.

The protein resides in the cytoplasm. The catalysed reaction is Endonucleolytic cleavage at a junction such as a reciprocal single-stranded crossover between two homologous DNA duplexes (Holliday junction).. The RuvA-RuvB-RuvC complex processes Holliday junction (HJ) DNA during genetic recombination and DNA repair. Endonuclease that resolves HJ intermediates. Cleaves cruciform DNA by making single-stranded nicks across the HJ at symmetrical positions within the homologous arms, yielding a 5'-phosphate and a 3'-hydroxyl group; requires a central core of homology in the junction. The consensus cleavage sequence is 5'-(A/T)TT(C/G)-3'. Cleavage occurs on the 3'-side of the TT dinucleotide at the point of strand exchange. HJ branch migration catalyzed by RuvA-RuvB allows RuvC to scan DNA until it finds its consensus sequence, where it cleaves and resolves the cruciform DNA. In Teredinibacter turnerae (strain ATCC 39867 / T7901), this protein is Crossover junction endodeoxyribonuclease RuvC.